Here is a 542-residue protein sequence, read N- to C-terminus: CTP synthase (542 aa).

The amidoligase domain stretch occupies residues 1–265; it reads MTRYIFVTGG…DDFVVERFGL (265 aa). A CTP-binding site is contributed by Ser13. Ser13 is a binding site for UTP. Residues 14–19 and Asp71 contribute to the ATP site; that span reads SLGKGI. Residues Asp71 and Glu139 each contribute to the Mg(2+) site. CTP-binding positions include 146 to 148, 186 to 191, and Lys222; these read DIE and KTKPTQ. UTP is bound by residues 186-191 and Lys222; that span reads KTKPTQ. A Glutamine amidotransferase type-1 domain is found at 290-541; sequence TIAMVGKYME…VKAALAQKNK (252 aa). Gly351 is an L-glutamine binding site. The active-site Nucleophile; for glutamine hydrolysis is Cys378. L-glutamine contacts are provided by residues 379 to 382, Glu402, and Arg469; that span reads LGMQ. Residues His514 and Glu516 contribute to the active site.

The protein belongs to the CTP synthase family. In terms of assembly, homotetramer.

The enzyme catalyses UTP + L-glutamine + ATP + H2O = CTP + L-glutamate + ADP + phosphate + 2 H(+). It carries out the reaction L-glutamine + H2O = L-glutamate + NH4(+). The catalysed reaction is UTP + NH4(+) + ATP = CTP + ADP + phosphate + 2 H(+). Its pathway is pyrimidine metabolism; CTP biosynthesis via de novo pathway; CTP from UDP: step 2/2. Allosterically activated by GTP, when glutamine is the substrate; GTP has no effect on the reaction when ammonia is the substrate. The allosteric effector GTP functions by stabilizing the protein conformation that binds the tetrahedral intermediate(s) formed during glutamine hydrolysis. Inhibited by the product CTP, via allosteric rather than competitive inhibition. In terms of biological role, catalyzes the ATP-dependent amination of UTP to CTP with either L-glutamine or ammonia as the source of nitrogen. Regulates intracellular CTP levels through interactions with the four ribonucleotide triphosphates. This chain is CTP synthase, found in Pseudomonas putida (strain GB-1).